The chain runs to 444 residues: Bystin (444 aa).

2 disordered regions span residues 1–37 and 53–85; these read MAKKRDRIVNTQPFISDDASVASSRKRSKVPKTHQKQ and ALAQQKEVADEENAERNPSSAAFAVAGAATAGE. The segment covering 24–34 has biased composition (basic residues); that stretch reads SRKRSKVPKTH. Positions 73–84 are enriched in low complexity; that stretch reads AAFAVAGAATAG.

The protein belongs to the bystin family. As to quaternary structure, component of the 40S pre-ribosome. As to expression, highly expressed in flowers and at lower levels in roots, hypocotyls, stems, leaves, siliques and seeds.

Its subcellular location is the nucleus. It is found in the nucleolus. It localises to the nucleoplasm. In terms of biological role, essential protein required during embryogenesis and pollen development. Required for processing of 20S pre-rRNA precursor and biogenesis of 40S ribosomal subunits. The protein is Bystin of Arabidopsis thaliana (Mouse-ear cress).